The following is a 177-amino-acid chain: Large ribosomal subunit protein bL19 (177 aa).

The protein belongs to the bacterial ribosomal protein bL19 family.

Functionally, this protein is located at the 30S-50S ribosomal subunit interface and may play a role in the structure and function of the aminoacyl-tRNA binding site. This is Large ribosomal subunit protein bL19 from Rhizobium meliloti (strain 1021) (Ensifer meliloti).